The primary structure comprises 450 residues: Phosphoglucosamine mutase (450 aa).

The active-site Phosphoserine intermediate is the serine 103. Positions 103, 243, 245, and 247 each coordinate Mg(2+). A Phosphoserine modification is found at serine 103.

It belongs to the phosphohexose mutase family. The cofactor is Mg(2+). In terms of processing, activated by phosphorylation.

The catalysed reaction is alpha-D-glucosamine 1-phosphate = D-glucosamine 6-phosphate. Catalyzes the conversion of glucosamine-6-phosphate to glucosamine-1-phosphate. The chain is Phosphoglucosamine mutase from Lactobacillus delbrueckii subsp. bulgaricus (strain ATCC BAA-365 / Lb-18).